We begin with the raw amino-acid sequence, 859 residues long: Photoactivated adenylate cyclase subunit beta-like protein ST- (859 aa).

Residues 56-149 (LRRLMYLSKS…GRMYGDWHMK (94 aa)) enclose the BLUF 1 domain. The disordered stretch occupies residues 420-444 (RPPIFDDTPKSNPRPRTPGYGGRQR). A BLUF 2 domain is found at 471 to 563 (LTTLTYISQA…RVYTSEWTLT (93 aa)). A disordered region spans residues 814–859 (ARSGEQPLTEPEQAKPDFRVSPGRDRHGVSGRRSNSSQGKGSIQVG). The segment covering 825 to 841 (EQAKPDFRVSPGRDRHG) has biased composition (basic and acidic residues). The span at 845 to 859 (RRSNSSQGKGSIQVG) shows a compositional bias: polar residues.

As to quaternary structure, heterotetramer of two alpha and two beta subunits.

The protein localises to the cell projection. It localises to the cilium. It is found in the flagellum. The chain is Photoactivated adenylate cyclase subunit beta-like protein ST- from Euglena gracilis.